Reading from the N-terminus, the 77-residue chain is Translation initiation factor IF-1, chloroplastic (77 aa).

Positions 1-71 (MKEQKLIHEG…TRGRIIYRLR (71 aa)) constitute an S1-like domain.

This sequence belongs to the IF-1 family. In terms of assembly, component of the 30S ribosomal translation pre-initiation complex which assembles on the 30S ribosome in the order IF-2 and IF-3, IF-1 and N-formylmethionyl-tRNA(fMet); mRNA recruitment can occur at any time during PIC assembly.

It localises to the plastid. The protein localises to the chloroplast. Its function is as follows. One of the essential components for the initiation of protein synthesis. Stabilizes the binding of IF-2 and IF-3 on the 30S subunit to which N-formylmethionyl-tRNA(fMet) subsequently binds. Helps modulate mRNA selection, yielding the 30S pre-initiation complex (PIC). Upon addition of the 50S ribosomal subunit IF-1, IF-2 and IF-3 are released leaving the mature 70S translation initiation complex. The chain is Translation initiation factor IF-1, chloroplastic from Cabomba caroliniana (Carolina fanwort).